The sequence spans 661 residues: Acetyl-coenzyme A synthetase (661 aa).

Residues 197 to 200 (RGGK) and T320 contribute to the CoA site. ATP-binding positions include 396 to 398 (GEP), 420 to 425 (DTWWQT), D511, and R526. Position 534 (S534) interacts with CoA. R537 contacts ATP. Residues V548 and V553 each coordinate Mg(2+). K620 carries the post-translational modification N6-acetyllysine.

Belongs to the ATP-dependent AMP-binding enzyme family. Mg(2+) serves as cofactor. In terms of processing, acetylated. Deacetylation by the SIR2-homolog deacetylase activates the enzyme.

It catalyses the reaction acetate + ATP + CoA = acetyl-CoA + AMP + diphosphate. Functionally, catalyzes the conversion of acetate into acetyl-CoA (AcCoA), an essential intermediate at the junction of anabolic and catabolic pathways. AcsA undergoes a two-step reaction. In the first half reaction, AcsA combines acetate with ATP to form acetyl-adenylate (AcAMP) intermediate. In the second half reaction, it can then transfer the acetyl group from AcAMP to the sulfhydryl group of CoA, forming the product AcCoA. This Leptospira interrogans serogroup Icterohaemorrhagiae serovar Lai (strain 56601) protein is Acetyl-coenzyme A synthetase.